The following is a 603-amino-acid chain: Spastin (603 aa).

The disordered stretch occupies residues 1–34 (MNSPGGRNNKKKPVTPAAETGPGPPTPPPPPAET). The Cytoplasmic segment spans residues 1–54 (MNSPGGRNNKKKPVTPAAETGPGPPTPPPPPAETQVLLAPPSLHKRNLYLFSYP). The span at 22–32 (PGPPTPPPPPA) shows a compositional bias: pro residues. The helical intramembrane region spans 55-75 (LLAAFSLLRFLAFQLGLLFVW). The Cytoplasmic portion of the chain corresponds to 76–603 (FCERLSRRVM…WNKEFGDTTV (528 aa)). An MIT domain is found at 113–188 (YHQQAFQYIS…LMAKDRLQLL (76 aa)). Residues 216-294 (GLLKPEKGAV…RTNKPTTPTT (79 aa)) form a disordered region. A compositionally biased stretch (basic and acidic residues) spans 219–231 (KPEKGAVPKKKDP). The span at 281–294 (KNNTRTNKPTTPTT) shows a compositional bias: low complexity. 369-376 (GPPGNGKT) is a binding site for ATP.

The protein belongs to the AAA ATPase family. Spastin subfamily. In terms of assembly, homohexamer. The homohexamer is stabilized by ATP-binding. The homohexamer may adopt a ring conformation through which microtubules pass prior to being severed. Interacts with microtubules.

Its subcellular location is the membrane. It localises to the cytoplasm. The protein resides in the cytoskeleton. The protein localises to the microtubule organizing center. It is found in the centrosome. Its subcellular location is the perinuclear region. It localises to the nucleus. It catalyses the reaction n ATP + n H2O + a microtubule = n ADP + n phosphate + (n+1) alpha/beta tubulin heterodimers.. In terms of biological role, ATP-dependent microtubule severing protein that specifically recognizes and cuts microtubules that are polyglutamylated. Preferentially recognizes and acts on microtubules decorated with short polyglutamate tails: severing activity increases as the number of glutamates per tubulin rises from one to eight, but decreases beyond this glutamylation threshold. Microtubule severing promotes reorganization of cellular microtubule arrays and the release of microtubules from the centrosome following nucleation. Required for membrane traffic from the endoplasmic reticulum (ER) to the Golgi and for completion of the abscission stage of cytokinesis. Also plays a role in axon growth and the formation of axonal branches. The protein is Spastin of Xenopus tropicalis (Western clawed frog).